A 247-amino-acid polypeptide reads, in one-letter code: Caffeoyl-CoA O-methyltransferase 2 (247 aa).

Lys-21 serves as a coordination point for substrate. Residues Thr-63, Glu-85, 87-88 (GV), Ser-93, Asp-111, and Ala-140 contribute to the S-adenosyl-L-methionine site. Asp-163 serves as a coordination point for substrate. Asp-163 contacts a divalent metal cation. Asp-165 contributes to the S-adenosyl-L-methionine binding site. A divalent metal cation is bound by residues Asp-189 and Asn-190. Asn-194 contacts substrate.

It belongs to the class I-like SAM-binding methyltransferase superfamily. Cation-dependent O-methyltransferase family. CCoAMT subfamily. The cofactor is a divalent metal cation.

It catalyses the reaction (E)-caffeoyl-CoA + S-adenosyl-L-methionine = (E)-feruloyl-CoA + S-adenosyl-L-homocysteine + H(+). It functions in the pathway aromatic compound metabolism; phenylpropanoid biosynthesis. In terms of biological role, methylates caffeoyl-CoA to feruloyl-CoA and 5-hydroxyferuloyl-CoA to sinapoyl-CoA. Plays a role in the synthesis of feruloylated polysaccharides. Involved in the reinforcement of the plant cell wall. Also involved in the responding to wounding or pathogen challenge by the increased formation of cell wall-bound ferulic acid polymers. This is Caffeoyl-CoA O-methyltransferase 2 (CCOAOMT2) from Eucalyptus globulus (Tasmanian blue gum).